The chain runs to 311 residues: Malate dehydrogenase (311 aa).

Residues 7–13 (GAAGGIG) and aspartate 34 contribute to the NAD(+) site. Substrate-binding residues include arginine 81 and arginine 87. Residues asparagine 94 and 117–119 (ITN) contribute to the NAD(+) site. Substrate-binding residues include asparagine 119 and arginine 153. The Proton acceptor role is filled by histidine 177. Methionine 227 is a binding site for NAD(+).

It belongs to the LDH/MDH superfamily. MDH type 1 family. In terms of assembly, homodimer.

The enzyme catalyses (S)-malate + NAD(+) = oxaloacetate + NADH + H(+). In terms of biological role, catalyzes the reversible oxidation of malate to oxaloacetate. The polypeptide is Malate dehydrogenase (Shewanella denitrificans (strain OS217 / ATCC BAA-1090 / DSM 15013)).